Consider the following 168-residue polypeptide: Phosphopantetheine adenylyltransferase (168 aa).

Threonine 13 contributes to the substrate binding site. Residues 13–14 and histidine 21 contribute to the ATP site; that span reads TF. Residues lysine 45, leucine 78, and arginine 92 each coordinate substrate. ATP-binding positions include 93–95, glutamate 103, and 128–134; these read GLR and TQFISSS.

This sequence belongs to the bacterial CoaD family. Homohexamer. Requires Mg(2+) as cofactor.

It localises to the cytoplasm. The enzyme catalyses (R)-4'-phosphopantetheine + ATP + H(+) = 3'-dephospho-CoA + diphosphate. The protein operates within cofactor biosynthesis; coenzyme A biosynthesis; CoA from (R)-pantothenate: step 4/5. In terms of biological role, reversibly transfers an adenylyl group from ATP to 4'-phosphopantetheine, yielding dephospho-CoA (dPCoA) and pyrophosphate. This Wolbachia pipientis wMel protein is Phosphopantetheine adenylyltransferase.